A 408-amino-acid polypeptide reads, in one-letter code: Sporulation integral membrane protein YlbJ (408 aa).

Helical transmembrane passes span 6–26 (INTL…ISHP), 43–63 (VVFP…GFGI), 81–101 (VPGV…PAGA), 131–151 (LFIF…GILL), 214–234 (VTSS…FSVF), 294–314 (IIVS…VAGI), 324–344 (PFFI…MLLW), and 377–397 (LLVQ…IIIF).

It localises to the cell membrane. Functionally, required for spore cortex formation. In Bacillus subtilis (strain 168), this protein is Sporulation integral membrane protein YlbJ (ylbJ).